Consider the following 235-residue polypeptide: Protein shisa-5 (235 aa).

Positions 1–26 (MAAPAPSLWTLLLLLLLLPPPPGAHG) are cleaved as a signal peptide. At 27 to 105 (ELCRPFGEDN…SSFDSDPMSG (79 aa)) the chain is on the extracellular side. A helical transmembrane segment spans residues 106-126 (FGATVAIGVTIFVVFIATIII). Topologically, residues 127–235 (CFTCSCCCLY…TYMDSLKTIP (109 aa)) are cytoplasmic. The segment at 157–235 (APYPQPQPQP…TYMDSLKTIP (79 aa)) is disordered. Pro residues-rich tracts occupy residues 159-172 (YPQP…PSYP) and 181-211 (PMPP…PPPY).

It belongs to the shisa family. Interacts with PDCD6; PDCD6 can stabilize SHISA5. In terms of tissue distribution, spleen and thymus.

The protein resides in the endoplasmic reticulum membrane. Its subcellular location is the nucleus membrane. Functionally, can induce apoptosis in a caspase-dependent manner and plays a role in p53/TP53-dependent apoptosis. The protein is Protein shisa-5 (Shisa5) of Mus musculus (Mouse).